We begin with the raw amino-acid sequence, 373 residues long: Putative C-P lyase subunit protein HtxH (373 aa).

This sequence belongs to the PhnI family.

In terms of biological role, belongs to an operon involved in hypophosphite oxidation. Exact function not known. This is Putative C-P lyase subunit protein HtxH (htxH) from Stutzerimonas stutzeri (Pseudomonas stutzeri).